The sequence spans 211 residues: tRNA (pseudouridine(54)-N(1))-methyltransferase (211 aa).

The S-adenosyl-L-methionine site is built by leucine 128, glycine 150, and cysteine 183.

The protein belongs to the methyltransferase superfamily. TrmY family. As to quaternary structure, homodimer.

The protein resides in the cytoplasm. The enzyme catalyses pseudouridine(54) in tRNA + S-adenosyl-L-methionine = N(1)-methylpseudouridine(54) in tRNA + S-adenosyl-L-homocysteine + H(+). Specifically catalyzes the N1-methylation of pseudouridine at position 54 (Psi54) in tRNAs. In Methanosarcina mazei (strain ATCC BAA-159 / DSM 3647 / Goe1 / Go1 / JCM 11833 / OCM 88) (Methanosarcina frisia), this protein is tRNA (pseudouridine(54)-N(1))-methyltransferase.